A 137-amino-acid chain; its full sequence is Small ribosomal subunit protein uS9 (137 aa).

The segment covering 106–117 (KTEGYLTRDPRA) has biased composition (basic and acidic residues). The segment at 106–137 (KTEGYLTRDPRAKERRKYGLRKARKAPQYSKR) is disordered. Basic residues predominate over residues 118-137 (KERRKYGLRKARKAPQYSKR).

This sequence belongs to the universal ribosomal protein uS9 family.

In Thermosynechococcus vestitus (strain NIES-2133 / IAM M-273 / BP-1), this protein is Small ribosomal subunit protein uS9.